Reading from the N-terminus, the 88-residue chain is Small ribosomal subunit protein bS20 (88 aa).

The span at 1-17 (MANIKSNEKRLRQDIKR) shows a compositional bias: basic and acidic residues. The tract at residues 1-25 (MANIKSNEKRLRQDIKRNLNNKGQK) is disordered.

Belongs to the bacterial ribosomal protein bS20 family.

Its function is as follows. Binds directly to 16S ribosomal RNA. The sequence is that of Small ribosomal subunit protein bS20 from Mycoplasma genitalium (strain ATCC 33530 / DSM 19775 / NCTC 10195 / G37) (Mycoplasmoides genitalium).